Here is a 287-residue protein sequence, read N- to C-terminus: MIPPRFEYHAPKSVGEAVALLGQLGSDAKLLAGGHSLLPMMKLRFAQPEHLIDINRIPELRGIREEGSTVVIGAMTVENDLISSPIVQARLPLLAEAAKLIADPQVRNRGTIGGDIAHGHPGNDHPALSIAVEAHFVLEGPNGRRTVPADGFFLGTYMTLLEENEVMVEIRVPAFAQGTGWAYEKLKRKTGDWATAGCAVVMRKSGNTVSHIRIALTNVAPTALRREGGRSRLLGKAFTKEAVQAAADAAIAICEPAEDLRGDADYKTAMAGQMVKRALNAAWARCA.

Residues 1–177 (MIPPRFEYHA…VEIRVPAFAQ (177 aa)) enclose the FAD-binding PCMH-type domain. FAD-binding positions include 32-36 (AGGHS) and 111-115 (TIGGD).

As to quaternary structure, dimer of heterotrimers. Each heterotrimer consists of a large, a medium and a small subunit. The cofactor is FAD.

It catalyses the reaction CO + a quinone + H2O = a quinol + CO2. Catalyzes the oxidation of carbon monoxide to carbon dioxide. This is Carbon monoxide dehydrogenase medium chain (cutM) from Hydrogenophaga pseudoflava (Pseudomonas carboxydoflava).